Consider the following 161-residue polypeptide: Regulator of ribonuclease activity A (161 aa).

It belongs to the RraA family. In terms of assembly, homotrimer. Binds to both RNA-binding sites in the C-terminal region of Rne and to RhlB.

It localises to the cytoplasm. In terms of biological role, globally modulates RNA abundance by binding to RNase E (Rne) and regulating its endonucleolytic activity. Can modulate Rne action in a substrate-dependent manner by altering the composition of the degradosome. Modulates RNA-binding and helicase activities of the degradosome. The polypeptide is Regulator of ribonuclease activity A (Pectobacterium atrosepticum (strain SCRI 1043 / ATCC BAA-672) (Erwinia carotovora subsp. atroseptica)).